The following is a 518-amino-acid chain: Transcription factor TT8 (518 aa).

Coiled coils occupy residues 220–240 (EVHE…MSEE) and 405–428 (VNHL…KRTR). The 50-residue stretch at 359-408 (REDLSHVVAERRRREKLNEKFITLRSMVPFVTKMDKVSILGDTIAYVNHL) folds into the bHLH domain.

Belongs to the bHLH protein family. As to quaternary structure, homodimer. Interacts with MYB4, MYB5, MYB6, MYB82, MYB113, MYB114, MYB75/PAP1, MYB90/PAP2, and TT2. Buds, flowers and developing siliques, but not in leaves, stems and roots.

The protein resides in the nucleus. Transcription activator, when associated with MYB75/PAP1 or MYB90/PAP2. Involved in the control of flavonoid pigmentation. Plays a key role in regulating leucoanthocyanidin reductase (BANYULS) and dihydroflavonol-4-reductase (DFR). Not required for leucoanthocyanidin dioxygenase (LDOX) expression. The protein is Transcription factor TT8 of Arabidopsis thaliana (Mouse-ear cress).